The primary structure comprises 476 residues: MNFETVIGLEVHVELKTKSKIFSSSPTPFGAAANTQTSVIDLGYPGVLPVLNKEAVNFAMKAAMALNCEIATDTKFDRKNYFYPDNPKAYQISQFDKPIGENGWIEIEVGGKTKRIGITRLHLEEDAGKLTHTGDGYSLVDYNRQGTPLVEIVSEPDIRTPEEAYAYLEKLKSIIQYTGVSDCKMEEGSLRCDANISLRPIGQEEFGTKTELKNLNSFAFVQKGLEHEEKRQAQVLLSGGVIQQETRRYDEASKTTILMRVKEGSDDYRYFPEPDLVELYIDDEWKQRVKDSIPELPDERRKRYIEELGLPAYDAKVLTLTKEMSDFFEAAVEKGADAKLASNWLMGEVSAYLNAQQKELADVELTPEGLAGLVKLIEKGTISSKIAKKVFKELIEKGGDAEKIVKEKGLVQISDEATLRKLVTEALDNNPQSIEDFKNGKDRAIGFLVGQIMKASKGQANPPMVNKLLLEEINKR.

It belongs to the GatB/GatE family. GatB subfamily. Heterotrimer of A, B and C subunits.

It catalyses the reaction L-glutamyl-tRNA(Gln) + L-glutamine + ATP + H2O = L-glutaminyl-tRNA(Gln) + L-glutamate + ADP + phosphate + H(+). It carries out the reaction L-aspartyl-tRNA(Asn) + L-glutamine + ATP + H2O = L-asparaginyl-tRNA(Asn) + L-glutamate + ADP + phosphate + 2 H(+). Functionally, allows the formation of correctly charged Asn-tRNA(Asn) or Gln-tRNA(Gln) through the transamidation of misacylated Asp-tRNA(Asn) or Glu-tRNA(Gln) in organisms which lack either or both of asparaginyl-tRNA or glutaminyl-tRNA synthetases. The reaction takes place in the presence of glutamine and ATP through an activated phospho-Asp-tRNA(Asn) or phospho-Glu-tRNA(Gln). This is Aspartyl/glutamyl-tRNA(Asn/Gln) amidotransferase subunit B from Bacillus licheniformis (strain ATCC 14580 / DSM 13 / JCM 2505 / CCUG 7422 / NBRC 12200 / NCIMB 9375 / NCTC 10341 / NRRL NRS-1264 / Gibson 46).